The chain runs to 809 residues: Glycerol-3-phosphate acyltransferase (809 aa).

The HXXXXD motif motif lies at 306 to 311 (HRSHMD).

It belongs to the GPAT/DAPAT family.

It is found in the cell inner membrane. The catalysed reaction is sn-glycerol 3-phosphate + an acyl-CoA = a 1-acyl-sn-glycero-3-phosphate + CoA. Its pathway is phospholipid metabolism; CDP-diacylglycerol biosynthesis; CDP-diacylglycerol from sn-glycerol 3-phosphate: step 1/3. The sequence is that of Glycerol-3-phosphate acyltransferase from Vibrio vulnificus (strain CMCP6).